Here is a 740-residue protein sequence, read N- to C-terminus: NAD(P)H-quinone oxidoreductase subunit 5, chloroplastic (740 aa).

The next 16 membrane-spanning stretches (helical) occupy residues 9–29 (WIIP…LLLF), 40–60 (WSFL…YLSI), 89–109 (IDPL…LVLI), 125–145 (FAYM…SNLI), 147–167 (IYFF…FWFT), 185–205 (GDFG…SFEF), 221–241 (VNLL…IAKS), 258–278 (TPIS…FLVA), 283–303 (LFIV…ITIL), 327–347 (LGYM…FHLI), 354–374 (ALLF…VGYS), 396–416 (TAFL…CFWS), 425–445 (LLFS…TAFY), 547–567 (ILFP…IGIP), 606–626 (FSVS…KPFY), and 718–738 (ISSY…FLKI).

This sequence belongs to the complex I subunit 5 family. In terms of assembly, NDH is composed of at least 16 different subunits, 5 of which are encoded in the nucleus.

The protein resides in the plastid. The protein localises to the chloroplast thylakoid membrane. It carries out the reaction a plastoquinone + NADH + (n+1) H(+)(in) = a plastoquinol + NAD(+) + n H(+)(out). The catalysed reaction is a plastoquinone + NADPH + (n+1) H(+)(in) = a plastoquinol + NADP(+) + n H(+)(out). In terms of biological role, NDH shuttles electrons from NAD(P)H:plastoquinone, via FMN and iron-sulfur (Fe-S) centers, to quinones in the photosynthetic chain and possibly in a chloroplast respiratory chain. The immediate electron acceptor for the enzyme in this species is believed to be plastoquinone. Couples the redox reaction to proton translocation, and thus conserves the redox energy in a proton gradient. The chain is NAD(P)H-quinone oxidoreductase subunit 5, chloroplastic (ndhF) from Aethionema cordifolium (Lebanon stonecress).